A 271-amino-acid polypeptide reads, in one-letter code: Undecaprenyl-diphosphatase (271 aa).

8 helical membrane passes run 5–25 (LLIKAFIMGIVEGLTEFLPIS), 43–63 (FATMFEIVIQLGAILAVVYYF), 80–100 (GFNLWYKTFIAFLPAAIIGIL), 109–129 (LFSPFTVAIALIVGAIMMIVI), 145–165 (VSTSKAFWIGVAQVMSLFPGM), 186–206 (AEFSFFLAIPTMLAATGFELV), 215–235 (LEWEALAVGFIMSFITALIVV), and 246–266 (VLKPFAYYRLLVGVLMLFLIA).

It belongs to the UppP family.

It localises to the cell membrane. The enzyme catalyses di-trans,octa-cis-undecaprenyl diphosphate + H2O = di-trans,octa-cis-undecaprenyl phosphate + phosphate + H(+). In terms of biological role, catalyzes the dephosphorylation of undecaprenyl diphosphate (UPP). Confers resistance to bacitracin. This Caldanaerobacter subterraneus subsp. tengcongensis (strain DSM 15242 / JCM 11007 / NBRC 100824 / MB4) (Thermoanaerobacter tengcongensis) protein is Undecaprenyl-diphosphatase.